The sequence spans 366 residues: Ribosomal RNA large subunit methyltransferase M (366 aa).

S-adenosyl-L-methionine is bound by residues serine 188, cysteine 221–glycine 224, aspartate 240, aspartate 260, and aspartate 277. The Proton acceptor role is filled by lysine 306.

The protein belongs to the class I-like SAM-binding methyltransferase superfamily. RNA methyltransferase RlmE family. RlmM subfamily. Monomer.

The protein resides in the cytoplasm. The catalysed reaction is cytidine(2498) in 23S rRNA + S-adenosyl-L-methionine = 2'-O-methylcytidine(2498) in 23S rRNA + S-adenosyl-L-homocysteine + H(+). Functionally, catalyzes the 2'-O-methylation at nucleotide C2498 in 23S rRNA. The polypeptide is Ribosomal RNA large subunit methyltransferase M (Shigella boydii serotype 4 (strain Sb227)).